A 462-amino-acid chain; its full sequence is MIPVIALVGRPNVGKSTLFNRITKTQDALVADFPGLTRDRQYGHAQHENKSFIIVDTGGIGVDDIEVDTLMSKQSQVALNEANVILFLVDGRSGLTGIDQQIAQALRKLNKKVHLVVNKTDGINEDIACADFQSLGITDIHAISASHGGGISSLLEEILEPFITEMHEATDDKAIKIAFAGRPNVGKSTLINRILGEERVVVYDMPGTTRDSISIPFTREDKQYVLIDTAGVRRKSRIDEKIEKFSVIKTLQAIKEAHVCLLLLDANEGITDQDMNLLGFIIESGKALVIAVNKWDGLEEEHKEKIKSELSRRLHFANFAKIRFISALHGSGVGGLFKDINEAYHSAIQSFSTPKLTRLLQDISAKHTPPCINGRRIKLRYAHLGGHNPPVIVIHGNQLDALPESYKRYLNNEFIKHLGLVGTPLKIEFKGGQNPFANKKNKLSQRQVNKKKRLMRWAKNKK.

2 EngA-type G domains span residues 3–166 and 175–348; these read PVIA…ITEM and IKIA…HSAI. GTP is bound by residues 9–16, 56–60, 118–121, 181–188, 228–232, and 293–296; these read GRPNVGKS, DTGGI, NKTD, DTAGV, and NKWD. The region spanning 349–433 is the KH-like domain; that stretch reads QSFSTPKLTR…PLKIEFKGGQ (85 aa).

This sequence belongs to the TRAFAC class TrmE-Era-EngA-EngB-Septin-like GTPase superfamily. EngA (Der) GTPase family. Associates with the 50S ribosomal subunit.

Its function is as follows. GTPase that plays an essential role in the late steps of ribosome biogenesis. This is GTPase Der from Legionella pneumophila (strain Lens).